Reading from the N-terminus, the 131-residue chain is Glycine cleavage system H protein (131 aa).

The Lipoyl-binding domain occupies Thr-24–Lys-106. N6-lipoyllysine is present on Lys-65.

It belongs to the GcvH family. In terms of assembly, the glycine cleavage system is composed of four proteins: P, T, L and H. It depends on (R)-lipoate as a cofactor.

Functionally, the glycine cleavage system catalyzes the degradation of glycine. The H protein shuttles the methylamine group of glycine from the P protein to the T protein. In Chromohalobacter salexigens (strain ATCC BAA-138 / DSM 3043 / CIP 106854 / NCIMB 13768 / 1H11), this protein is Glycine cleavage system H protein.